Consider the following 271-residue polypeptide: MVTMKDLLECGVHFGHQTRRWNPKMKKYIFGVRKNIHIIDLQKTLRYFRYTYNVVRDAAAEGKTVMFVGTKKQASETIKQYADTINAPYVNYRWLGGMLTNFSTIKKSIRKLEVIEEMEASGQIELLTKKEKLMLTRKKEKLEKYLGGVRHMKKAPDMLFVVDAAKEKIAVAEARRLGIPVVAPLDTNCDPDVVDFPIPGNDDAIRSIQLFCKEMAEAIQEGRALAGSEEGEATEEVTPASEAEKQEVLAEAMSEEGDALQESEVVEEEEK.

The tract at residues 223-271 (RALAGSEEGEATEEVTPASEAEKQEVLAEAMSEEGDALQESEVVEEEEK) is disordered. Residues 253-271 (MSEEGDALQESEVVEEEEK) are compositionally biased toward acidic residues.

It belongs to the universal ribosomal protein uS2 family.

The chain is Small ribosomal subunit protein uS2 from Wolinella succinogenes (strain ATCC 29543 / DSM 1740 / CCUG 13145 / JCM 31913 / LMG 7466 / NCTC 11488 / FDC 602W) (Vibrio succinogenes).